Here is an 86-residue protein sequence, read N- to C-terminus: Large ribosomal subunit protein bL28 (86 aa).

The protein belongs to the bacterial ribosomal protein bL28 family.

The polypeptide is Large ribosomal subunit protein bL28 (Bacteroides fragilis (strain ATCC 25285 / DSM 2151 / CCUG 4856 / JCM 11019 / LMG 10263 / NCTC 9343 / Onslow / VPI 2553 / EN-2)).